The following is a 117-amino-acid chain: UPF0102 protein RHOS4_03930 (117 aa).

This sequence belongs to the UPF0102 family.

The chain is UPF0102 protein RHOS4_03930 from Cereibacter sphaeroides (strain ATCC 17023 / DSM 158 / JCM 6121 / CCUG 31486 / LMG 2827 / NBRC 12203 / NCIMB 8253 / ATH 2.4.1.) (Rhodobacter sphaeroides).